The following is a 607-amino-acid chain: Arginine--tRNA ligase (607 aa).

The 'HIGH' region motif lies at 147 to 157 (PNIAKEMHVGH).

It belongs to the class-I aminoacyl-tRNA synthetase family. Monomer.

Its subcellular location is the cytoplasm. It carries out the reaction tRNA(Arg) + L-arginine + ATP = L-arginyl-tRNA(Arg) + AMP + diphosphate. The polypeptide is Arginine--tRNA ligase (Prochlorococcus marinus (strain NATL1A)).